A 138-amino-acid polypeptide reads, in one-letter code: Large ribosomal subunit protein uL16 (138 aa).

Positions 1 to 13 (MLQPARRKFRKEQ) are enriched in basic residues. The segment at 1–22 (MLQPARRKFRKEQKGRNTGLAT) is disordered.

This sequence belongs to the universal ribosomal protein uL16 family. As to quaternary structure, part of the 50S ribosomal subunit.

Binds 23S rRNA and is also seen to make contacts with the A and possibly P site tRNAs. This is Large ribosomal subunit protein uL16 from Thiobacillus denitrificans (strain ATCC 25259 / T1).